A 120-amino-acid chain; its full sequence is NADH-ubiquinone oxidoreductase chain 3 (120 aa).

Helical transmembrane passes span 10-30, 62-82, and 89-109; these read ILIL…LGYF, FYLV…LFPF, and MTLF…IGFI.

It belongs to the complex I subunit 3 family.

It localises to the mitochondrion membrane. The catalysed reaction is a ubiquinone + NADH + 5 H(+)(in) = a ubiquinol + NAD(+) + 4 H(+)(out). In terms of biological role, core subunit of the mitochondrial membrane respiratory chain NADH dehydrogenase (Complex I) that is believed to belong to the minimal assembly required for catalysis. Complex I functions in the transfer of electrons from NADH to the respiratory chain. The immediate electron acceptor for the enzyme is believed to be ubiquinone. This chain is NADH-ubiquinone oxidoreductase chain 3 (nad3), found in Dictyostelium citrinum (Slime mold).